We begin with the raw amino-acid sequence, 131 residues long: Small ribosomal subunit protein uS11 (131 aa).

Belongs to the universal ribosomal protein uS11 family. As to quaternary structure, part of the 30S ribosomal subunit. Interacts with proteins S7 and S18. Binds to IF-3.

Functionally, located on the platform of the 30S subunit, it bridges several disparate RNA helices of the 16S rRNA. Forms part of the Shine-Dalgarno cleft in the 70S ribosome. This chain is Small ribosomal subunit protein uS11, found in Clostridium novyi (strain NT).